The sequence spans 240 residues: 7-cyano-7-deazaguanine synthase (240 aa).

18–28 lines the ATP pocket; sequence FSGGQDSTTCL. Residues Cys197, Cys206, Cys209, and Cys212 each coordinate Zn(2+).

Belongs to the QueC family. Zn(2+) is required as a cofactor.

The catalysed reaction is 7-carboxy-7-deazaguanine + NH4(+) + ATP = 7-cyano-7-deazaguanine + ADP + phosphate + H2O + H(+). The protein operates within purine metabolism; 7-cyano-7-deazaguanine biosynthesis. In terms of biological role, catalyzes the ATP-dependent conversion of 7-carboxy-7-deazaguanine (CDG) to 7-cyano-7-deazaguanine (preQ(0)). This Shewanella putrefaciens (strain CN-32 / ATCC BAA-453) protein is 7-cyano-7-deazaguanine synthase.